The primary structure comprises 344 residues: Holliday junction branch migration complex subunit RuvB (344 aa).

The tract at residues 4–184 is large ATPase domain (RuvB-L); that stretch reads QDRIIDANAK…FGIVQRLEFY (181 aa). ATP is bound by residues Arg24, Gly65, Lys68, Thr69, Thr70, 131–133, Arg174, Tyr184, and Arg221; that span reads EDF. Thr69 provides a ligand contact to Mg(2+). Residues 185–255 form a small ATPAse domain (RuvB-S) region; it reads NIEDLTHIVE…IADLALNMLN (71 aa). A head domain (RuvB-H) region spans residues 258 to 344; sequence EHGFDHMDRR…ALKQDSLPGI (87 aa). Arg294, Arg313, and Arg318 together coordinate DNA.

Belongs to the RuvB family. Homohexamer. Forms an RuvA(8)-RuvB(12)-Holliday junction (HJ) complex. HJ DNA is sandwiched between 2 RuvA tetramers; dsDNA enters through RuvA and exits via RuvB. An RuvB hexamer assembles on each DNA strand where it exits the tetramer. Each RuvB hexamer is contacted by two RuvA subunits (via domain III) on 2 adjacent RuvB subunits; this complex drives branch migration. In the full resolvosome a probable DNA-RuvA(4)-RuvB(12)-RuvC(2) complex forms which resolves the HJ.

The protein localises to the cytoplasm. It carries out the reaction ATP + H2O = ADP + phosphate + H(+). The RuvA-RuvB-RuvC complex processes Holliday junction (HJ) DNA during genetic recombination and DNA repair, while the RuvA-RuvB complex plays an important role in the rescue of blocked DNA replication forks via replication fork reversal (RFR). RuvA specifically binds to HJ cruciform DNA, conferring on it an open structure. The RuvB hexamer acts as an ATP-dependent pump, pulling dsDNA into and through the RuvAB complex. RuvB forms 2 homohexamers on either side of HJ DNA bound by 1 or 2 RuvA tetramers; 4 subunits per hexamer contact DNA at a time. Coordinated motions by a converter formed by DNA-disengaged RuvB subunits stimulates ATP hydrolysis and nucleotide exchange. Immobilization of the converter enables RuvB to convert the ATP-contained energy into a lever motion, pulling 2 nucleotides of DNA out of the RuvA tetramer per ATP hydrolyzed, thus driving DNA branch migration. The RuvB motors rotate together with the DNA substrate, which together with the progressing nucleotide cycle form the mechanistic basis for DNA recombination by continuous HJ branch migration. Branch migration allows RuvC to scan DNA until it finds its consensus sequence, where it cleaves and resolves cruciform DNA. The protein is Holliday junction branch migration complex subunit RuvB of Saccharophagus degradans (strain 2-40 / ATCC 43961 / DSM 17024).